The chain runs to 146 residues: Hemoglobin subunit beta (146 aa).

Val1 is subject to N-acetylvaline. In terms of domain architecture, Globin spans 2–146 (HLTNEEKTAV…VATALAHKYH (145 aa)). Residue Ser44 is modified to Phosphoserine. The residue at position 59 (Lys59) is an N6-acetyllysine. His63 serves as a coordination point for heme b. Position 82 is an N6-acetyllysine (Lys82). His92 provides a ligand contact to heme b. At Cys93 the chain carries S-nitrosocysteine. Lys144 carries the post-translational modification N6-acetyllysine.

It belongs to the globin family. In terms of assembly, heterotetramer of two alpha chains and two beta chains. As to expression, red blood cells.

Functionally, involved in oxygen transport from the lung to the various peripheral tissues. This Lyroderma lyra (Greater Asian false-vampire bat) protein is Hemoglobin subunit beta (HBB).